The following is a 388-amino-acid chain: Quinolone resistance protein NorA (388 aa).

The next 12 membrane-spanning stretches (helical) occupy residues 5-25 (IFVLYFNIFLIFLGIGLVIPV), 42-62 (LLVAAFALSQMIISPFGGTLA), 69-89 (LIICIGLILFSVSEFMFAVGH), 99-119 (VIGGMSAGMVMPGVTGLIADI), 129-149 (FGYMSAIINSGFILGPGIGGF), 157-177 (MPFYFAGALGILAFIMSIVLI), 201-221 (WKVFITPVILTLVLSFGLSAF), 239-259 (DISIAITGGGIFGALFQIYFF), 269-289 (LTFIAWSLLYSVVVLILLVFA), 293-313 (WSIMLISFVVFIGFDMIRPAI), 331-351 (LNSTFTSMGNFIGPLIAGALF), and 355-375 (IEAPIYMAIGVSLAGVVIVLI).

Belongs to the major facilitator superfamily. TCR/Tet family.

It localises to the cell membrane. Its function is as follows. Involved in quinolone resistance. May constitute a membrane-associated active efflux pump of hydrophilic quinolones. In Staphylococcus aureus (strain COL), this protein is Quinolone resistance protein NorA (norA).